The chain runs to 262 residues: Putative protein-methionine-sulfoxide reductase subunit YedZ1 (262 aa).

Belongs to the MsrP family.

Its function is as follows. Part of the YedY1-YedZ1 system that may repair oxidized proteins containing methionine sulfoxide residues (Met-O). In Azospira oryzae (strain ATCC BAA-33 / DSM 13638 / PS) (Dechlorosoma suillum), this protein is Putative protein-methionine-sulfoxide reductase subunit YedZ1.